A 96-amino-acid chain; its full sequence is Histone-like protein p6 (96 aa).

Residues 1 to 19 (MAKMMQREITKTTVNVAKM) mediate DNA binding.

The protein belongs to the phi29likevirus histone-like protein p6 family. Homodimer. Homomultimer. Binds to double-stranded DNA giving rise to multimeric nucleoprotein complexes. Binding specificity for the viral DNA is based on supercoiling, the viral genome having a negative superhelicity lower than that of plasmid DNA. Interacts with the DNA replication protein p17; this interaction optimizes the binding of protein p6 at the viral DNA ends, thus favoring the initiation of replication.

Histone-like nucleoprotein that binds to the viral dsDNA and responsible for wrapping and compacting the viral DNA about 4-fold. Forms a nucleoprotein complex in which the DNA adopts a right-handed toroidal conformation winding around a protein core. Binds ito most, if not all, the viral genome, although with different affinity, the highest one corresponding to the genome ends. The formation of the nucleoprotein complex at the genome ends, activates the initiation of viral DNA replication. The binding of p6 would recruit the complex formed by the TP and the DNA polymerase to the origin. Protein p6 also represses early transcription from promoter C2, and, together with protein p4, represses transcription from promoters A2b and A2c and activates late transcription from promoter A3. Protein p6 is therefore involved in the early to late transcription switch. The formation of the nucleoprotein complex at the right end of the phage genome where the early promoter C2 is located affects local topology, which may contribute to the promoter repression. The chain is Histone-like protein p6 (6) from Bacillus phage PZA (Bacteriophage PZA).